Here is a 320-residue protein sequence, read N- to C-terminus: Small ribosomal subunit protein uS15m (320 aa).

Disordered stretches follow at residues 37–60 (NISQ…AQQR) and 214–242 (QSLE…DTGS).

The protein belongs to the universal ribosomal protein uS15 family. In terms of assembly, component of the mitochondrial small ribosomal subunit (mt-SSU). Mature N.crassa 74S mitochondrial ribosomes consist of a small (37S) and a large (54S) subunit. The 37S small subunit contains a 16S ribosomal RNA (16S mt-rRNA) and 32 different proteins. The 54S large subunit contains a 23S rRNA (23S mt-rRNA) and 42 different proteins.

It localises to the mitochondrion. Functionally, component of the mitochondrial ribosome (mitoribosome), a dedicated translation machinery responsible for the synthesis of mitochondrial genome-encoded proteins, including at least some of the essential transmembrane subunits of the mitochondrial respiratory chain. The mitoribosomes are attached to the mitochondrial inner membrane and translation products are cotranslationally integrated into the membrane. The sequence is that of Small ribosomal subunit protein uS15m (mrps28) from Neurospora crassa (strain ATCC 24698 / 74-OR23-1A / CBS 708.71 / DSM 1257 / FGSC 987).